Here is a 440-residue protein sequence, read N- to C-terminus: 3-phosphoshikimate 1-carboxyvinyltransferase (440 aa).

3-phosphoshikimate-binding residues include lysine 19, serine 20, and arginine 24. Phosphoenolpyruvate is bound at residue lysine 19. Phosphoenolpyruvate contacts are provided by glycine 92 and arginine 121. Serine 166, glutamine 168, aspartate 315, and lysine 342 together coordinate 3-phosphoshikimate. A phosphoenolpyruvate-binding site is contributed by glutamine 168. The active-site Proton acceptor is the aspartate 315. Arginine 346 and arginine 399 together coordinate phosphoenolpyruvate.

This sequence belongs to the EPSP synthase family. In terms of assembly, monomer.

The protein resides in the cytoplasm. It catalyses the reaction 3-phosphoshikimate + phosphoenolpyruvate = 5-O-(1-carboxyvinyl)-3-phosphoshikimate + phosphate. It functions in the pathway metabolic intermediate biosynthesis; chorismate biosynthesis; chorismate from D-erythrose 4-phosphate and phosphoenolpyruvate: step 6/7. Its function is as follows. Catalyzes the transfer of the enolpyruvyl moiety of phosphoenolpyruvate (PEP) to the 5-hydroxyl of shikimate-3-phosphate (S3P) to produce enolpyruvyl shikimate-3-phosphate and inorganic phosphate. This chain is 3-phosphoshikimate 1-carboxyvinyltransferase, found in Leptospira interrogans serogroup Icterohaemorrhagiae serovar copenhageni (strain Fiocruz L1-130).